We begin with the raw amino-acid sequence, 131 residues long: MTTKRKPYVRGMQPNWWTKLGFYRFYITREGTCLPQLWFSLVVLFGVFALKNGPESWAGFVGFLSNPIVMLINIVTLIATVFHTATWFKLAPKAVNIVVKDEKLPQEPIVRGLWGLTIVVTVVILAVALIV.

Helical transmembrane passes span 30–50, 58–78, and 109–129; these read EGTC…VFAL, AGFV…VTLI, and IVRG…AVAL.

The protein belongs to the FrdC family. In terms of assembly, part of an enzyme complex containing four subunits: a flavoprotein (FrdA), an iron-sulfur protein (FrdB), and two hydrophobic anchor proteins (FrdC and FrdD).

It is found in the cell inner membrane. Two distinct, membrane-bound, FAD-containing enzymes are responsible for the catalysis of fumarate and succinate interconversion; fumarate reductase is used in anaerobic growth, and succinate dehydrogenase is used in aerobic growth. Anchors the catalytic components of the fumarate reductase complex to the cell inner membrane, binds quinones. This is Fumarate reductase subunit C from Proteus mirabilis (strain HI4320).